The following is a 459-amino-acid chain: Putrescine aminotransferase (459 aa).

Pyridoxal 5'-phosphate contacts are provided by residues 150–151 (GT) and glutamine 274. Lysine 300 carries the N6-(pyridoxal phosphate)lysine modification. Threonine 332 contributes to the pyridoxal 5'-phosphate binding site.

It belongs to the class-III pyridoxal-phosphate-dependent aminotransferase family. Putrescine aminotransferase subfamily. Pyridoxal 5'-phosphate is required as a cofactor.

The enzyme catalyses an alkane-alpha,omega-diamine + 2-oxoglutarate = an omega-aminoaldehyde + L-glutamate. It carries out the reaction putrescine + 2-oxoglutarate = 1-pyrroline + L-glutamate + H2O. It catalyses the reaction cadaverine + 2-oxoglutarate = 5-aminopentanal + L-glutamate. The protein operates within amine and polyamine degradation; putrescine degradation; 4-aminobutanal from putrescine (transaminase route): step 1/1. Catalyzes the aminotransferase reaction from putrescine to 2-oxoglutarate, leading to glutamate and 4-aminobutanal, which spontaneously cyclizes to form 1-pyrroline. This is the first step in one of two pathways for putrescine degradation, where putrescine is converted into 4-aminobutanoate (gamma-aminobutyrate or GABA) via 4-aminobutanal. Also functions as a cadaverine transaminase in a a L-lysine degradation pathway to succinate that proceeds via cadaverine, glutarate and L-2-hydroxyglutarate. In Escherichia coli (strain ATCC 8739 / DSM 1576 / NBRC 3972 / NCIMB 8545 / WDCM 00012 / Crooks), this protein is Putrescine aminotransferase.